Here is a 182-residue protein sequence, read N- to C-terminus: Small ribosomal subunit protein uS4c (182 aa).

Residues 13 to 32 are disordered; that stretch reads GLTSKRPRSGSDLKNPLRSG. Positions 82 to 143 constitute an S4 RNA-binding domain; that stretch reads MRLDNILFRL…KQRSKALIQN (62 aa).

This sequence belongs to the universal ribosomal protein uS4 family. As to quaternary structure, part of the 30S ribosomal subunit. Contacts protein S5. The interaction surface between S4 and S5 is involved in control of translational fidelity.

The protein localises to the plastid. It localises to the chloroplast. Its function is as follows. One of the primary rRNA binding proteins, it binds directly to 16S rRNA where it nucleates assembly of the body of the 30S subunit. In terms of biological role, with S5 and S12 plays an important role in translational accuracy. The protein is Small ribosomal subunit protein uS4c (rps4) of Scadoxus puniceus (Paintbrush lily).